We begin with the raw amino-acid sequence, 357 residues long: Mannonate dehydratase (357 aa).

It belongs to the mannonate dehydratase family. The cofactor is Fe(2+). It depends on Mn(2+) as a cofactor.

The enzyme catalyses D-mannonate = 2-dehydro-3-deoxy-D-gluconate + H2O. It functions in the pathway carbohydrate metabolism; pentose and glucuronate interconversion. Catalyzes the dehydration of D-mannonate. The sequence is that of Mannonate dehydratase from Sorangium cellulosum (strain So ce56) (Polyangium cellulosum (strain So ce56)).